Here is a 538-residue protein sequence, read N- to C-terminus: Atos homolog protein B (538 aa).

Residues 1–18 are compositionally biased toward low complexity; the sequence is MRHVQAEPSPSSEPEAGP. Disordered stretches follow at residues 1-103, 153-185, 197-300, and 323-342; these read MRHV…GLLG, NTLH…QLHT, GGKS…VLDP, and SLRK…VPTP. Residues 227–238 are compositionally biased toward pro residues; it reads HTPPGPGPPGPC. Phosphoserine occurs at positions 254 and 255. A compositionally biased stretch (low complexity) spans 323–334; sequence SLRKGPGLLSPP. The interval 348-430 is required for macropage invasion; it reads LLGSFEESLL…VPKVGTIQVT (83 aa). A transactivation domain 1 (TAD1) region spans residues 436 to 444; that stretch reads QTVVKMFLV.

It belongs to the ATOS family.

Its subcellular location is the nucleus. Functionally, transcription regulator that may syncronize transcriptional and translational programs. The chain is Atos homolog protein B from Pongo abelii (Sumatran orangutan).